The sequence spans 214 residues: Non-structural protein NP-1 (214 aa).

Disordered stretches follow at residues 1–87 and 192–214; these read MSSE…TNPY and ESEEVTDEEMLSAVESMDTNASN. Residues 33–43 show a composition bias toward basic residues; the sequence is SRSRSPIRRHG. The segment covering 44–55 has biased composition (basic and acidic residues); sequence EKNLEYAHHSNQ. Residues 56 to 71 show a composition bias toward polar residues; it reads ENRQSSYTALKTSDQA. Over residues 192 to 201 the composition is skewed to acidic residues; the sequence is ESEEVTDEEM.

This sequence belongs to the Bocaparvovirus Non-structural protein NP-1 family.

It localises to the host nucleus. Its function is as follows. Required for the expression of the capsid proteins. Performs the splicing and internal polyadenylation of the viral capsid-encoding mRNA precursor, which allows its maturation and expression. Transactivates the viral promoter. The chain is Non-structural protein NP-1 (NP1) from Human bocavirus 2 (HBoV2).